A 512-amino-acid polypeptide reads, in one-letter code: Alpha-amylase 1 (512 aa).

Residues 1–25 (MRFSTEGFTSKVVAAILAFSRLVSA) form the signal peptide. An intrachain disulfide couples cysteine 66 to cysteine 74. Substrate is bound at residue tryptophan 119. Asparagine 157 is a binding site for Ca(2+). Histidine 158 provides a ligand contact to substrate. A disulfide bond links cysteine 186 and cysteine 200. 2 residues coordinate Ca(2+): glutamate 198 and aspartate 211. Asparagine 233 carries an N-linked (GlcNAc...) asparagine glycan. Arginine 240 is a binding site for substrate. Residues aspartate 242, histidine 246, and glutamate 266 each contribute to the Ca(2+) site. Residue aspartate 242 is the Nucleophile of the active site. 245 to 246 (KH) is a substrate binding site. Catalysis depends on glutamate 266, which acts as the Proton donor. Residue glycine 270 coordinates substrate. Cysteine 276 and cysteine 319 are joined by a disulfide. 2 residues coordinate substrate: aspartate 333 and arginine 380. Residues cysteine 475 and cysteine 510 are joined by a disulfide bond.

Belongs to the glycosyl hydrolase 13 family. Requires Ca(2+) as cofactor.

It localises to the secreted. The catalysed reaction is Endohydrolysis of (1-&gt;4)-alpha-D-glucosidic linkages in polysaccharides containing three or more (1-&gt;4)-alpha-linked D-glucose units.. Alpha-amylase expression underlies catabolite repression by glucose. The sequence is that of Alpha-amylase 1 (AMY1) from Schwanniomyces occidentalis (Yeast).